Here is a 273-residue protein sequence, read N- to C-terminus: Ribosomal RNA small subunit methyltransferase A (273 aa).

S-adenosyl-L-methionine is bound by residues N17, L19, G44, E65, and N111.

This sequence belongs to the class I-like SAM-binding methyltransferase superfamily. rRNA adenine N(6)-methyltransferase family. RsmA subfamily.

The protein localises to the cytoplasm. The catalysed reaction is adenosine(1518)/adenosine(1519) in 16S rRNA + 4 S-adenosyl-L-methionine = N(6)-dimethyladenosine(1518)/N(6)-dimethyladenosine(1519) in 16S rRNA + 4 S-adenosyl-L-homocysteine + 4 H(+). Specifically dimethylates two adjacent adenosines (A1518 and A1519) in the loop of a conserved hairpin near the 3'-end of 16S rRNA in the 30S particle. May play a critical role in biogenesis of 30S subunits. The protein is Ribosomal RNA small subunit methyltransferase A of Buchnera aphidicola subsp. Acyrthosiphon pisum (strain APS) (Acyrthosiphon pisum symbiotic bacterium).